Reading from the N-terminus, the 473-residue chain is Photosystem II CP43 reaction center protein (473 aa).

Positions 1–14 (MKTLYSLRRFYPVE) are excised as a propeptide. Thr15 bears the N-acetylthreonine mark. The residue at position 15 (Thr15) is a Phosphothreonine. Transmembrane regions (helical) follow at residues 69–93 (LFEV…PHLA), 134–155 (LLGP…KDRN), 178–200 (KALY…RKIT), 255–275 (KPFA…LSYS), and 291–312 (WFNN…ASQA). Glu367 provides a ligand contact to [CaMn4O5] cluster. Residues 447–471 (RARAAAAGFEKGIDRDFEPVLSMTP) traverse the membrane as a helical segment.

Belongs to the PsbB/PsbC family. PsbC subfamily. PSII is composed of 1 copy each of membrane proteins PsbA, PsbB, PsbC, PsbD, PsbE, PsbF, PsbH, PsbI, PsbJ, PsbK, PsbL, PsbM, PsbT, PsbX, PsbY, PsbZ, Psb30/Ycf12, at least 3 peripheral proteins of the oxygen-evolving complex and a large number of cofactors. It forms dimeric complexes. Requires Binds multiple chlorophylls and provides some of the ligands for the Ca-4Mn-5O cluster of the oxygen-evolving complex. It may also provide a ligand for a Cl- that is required for oxygen evolution. PSII binds additional chlorophylls, carotenoids and specific lipids. as cofactor.

It localises to the plastid. Its subcellular location is the chloroplast thylakoid membrane. One of the components of the core complex of photosystem II (PSII). It binds chlorophyll and helps catalyze the primary light-induced photochemical processes of PSII. PSII is a light-driven water:plastoquinone oxidoreductase, using light energy to abstract electrons from H(2)O, generating O(2) and a proton gradient subsequently used for ATP formation. This Eucalyptus globulus subsp. globulus (Tasmanian blue gum) protein is Photosystem II CP43 reaction center protein.